Consider the following 105-residue polypeptide: Cell division protein FtsB (105 aa).

The Cytoplasmic portion of the chain corresponds to methionine 1 to lysine 3. The helical transmembrane segment at leucine 4–leucine 21 threads the bilayer. Topologically, residues glycine 22 to glutamine 105 are periplasmic. Residues aspartate 28 to glycine 62 are a coiled coil.

It belongs to the FtsB family. As to quaternary structure, part of a complex composed of FtsB, FtsL and FtsQ.

The protein localises to the cell inner membrane. Its function is as follows. Essential cell division protein. May link together the upstream cell division proteins, which are predominantly cytoplasmic, with the downstream cell division proteins, which are predominantly periplasmic. The chain is Cell division protein FtsB from Sodalis glossinidius (strain morsitans).